A 290-amino-acid chain; its full sequence is Programmed cell death 1 ligand 1 (290 aa).

An N-terminal signal peptide occupies residues 1 to 18; sequence MRIFAGIIFTACCHLLRA. The Ig-like V-type domain maps to 19–127; it reads FTITAPKDLY…YGGADYKRIT (109 aa). The Extracellular portion of the chain corresponds to 19 to 239; it reads FTITAPKDLY…ATHPPQNRTH (221 aa). The N-linked (GlcNAc...) asparagine glycan is linked to Asn35. 2 disulfides stabilise this stretch: Cys40-Cys114 and Cys154-Cys208. In terms of domain architecture, Ig-like C2-type spans 133 to 224; the sequence is PYRKINQRIS…PGQNHTAELI (92 aa). N-linked (GlcNAc...) asparagine glycosylation is found at Asn191, Asn199, Asn218, and Asn236. Residues 240 to 260 traverse the membrane as a helical segment; the sequence is WVLLGSILLFLIVVSTVLLFL. At 261 to 290 the chain is on the cytoplasmic side; it reads RKQVRMLDVEKCGVEDTSSKNRNDTQFEET.

It belongs to the immunoglobulin superfamily. BTN/MOG family. As to quaternary structure, interacts with PDCD1. Interacts with CMTM4 and CMTM6. Interacts with CD80. In terms of processing, ubiquitinated; STUB1 likely mediates polyubiquitination of PD-L1/CD274 triggering its degradation. Ubiquitinated by MARCHF8; leading to degradation. Deubiquitinated by USP22; leading to stabilization. Highly expressed in the heart, thymus, skeletal muscle, and lung. Weakly expressed in the kidney, spleen, thyroid, and liver. Expressed on activated dendritic cells, B-cells and macrophages. Expressed in numerous tumor cells lines of lymphoid origin.

Its subcellular location is the cell membrane. It is found in the early endosome membrane. The protein resides in the recycling endosome membrane. Plays a critical role in induction and maintenance of immune tolerance to self. As a ligand for the inhibitory receptor PDCD1/PD-1, modulates the activation threshold of T-cells and limits T-cell effector response. Through a yet unknown activating receptor, may costimulate T-cell subsets that predominantly produce interleukin-10 (IL10). Functionally, the PDCD1-mediated inhibitory pathway is exploited by tumors to attenuate anti-tumor immunity and escape destruction by the immune system, thereby facilitating tumor survival. The interaction with PDCD1/PD-1 inhibits cytotoxic T lymphocytes (CTLs) effector function. The blockage of the PDCD1-mediated pathway results in the reversal of the exhausted T-cell phenotype and the normalization of the anti-tumor response, providing a rationale for cancer immunotherapy. This chain is Programmed cell death 1 ligand 1 (Cd274), found in Mus musculus (Mouse).